A 541-amino-acid polypeptide reads, in one-letter code: Protopine 6-monooxygenase (541 aa).

The helical transmembrane segment at 9 to 29 (LLLNTWISAYSMAALLALVLV) threads the bilayer. Cys-476 provides a ligand contact to heme.

Belongs to the cytochrome P450 family. It depends on heme as a cofactor.

The protein localises to the endoplasmic reticulum membrane. The catalysed reaction is protopine + reduced [NADPH--hemoprotein reductase] + O2 = 6-hydroxyprotopine + oxidized [NADPH--hemoprotein reductase] + H2O + H(+). It participates in alkaloid biosynthesis. Its function is as follows. Catalyzes the conversion of protopine and allocryptopine to dihydrosanguinarine and dihydrochelerythrine, respectively, in the biosynthesis of isoquinoline alkaloid sanguinarine. The protein is Protopine 6-monooxygenase (CYP82N3) of Papaver somniferum (Opium poppy).